A 343-amino-acid polypeptide reads, in one-letter code: Ferredoxin--NADP reductase (343 aa).

Residues Asp31, Lys39, Tyr43, Val83, Ile118, Asp285, and Ser326 each coordinate FAD.

This sequence belongs to the ferredoxin--NADP reductase type 2 family. Homodimer. FAD serves as cofactor.

The catalysed reaction is 2 reduced [2Fe-2S]-[ferredoxin] + NADP(+) + H(+) = 2 oxidized [2Fe-2S]-[ferredoxin] + NADPH. This chain is Ferredoxin--NADP reductase, found in Staphylococcus saprophyticus subsp. saprophyticus (strain ATCC 15305 / DSM 20229 / NCIMB 8711 / NCTC 7292 / S-41).